The sequence spans 485 residues: Calcium/manganese antiporter SLC30A10 (485 aa).

The Cytoplasmic segment spans residues Met-1–Arg-10. The chain crosses the membrane as a helical span at residues Leu-11–Leu-31. Over Gly-32 to Asp-40 the chain is Extracellular. Residues Ser-41–Ala-61 traverse the membrane as a helical segment. Over Arg-62–Gly-81 the chain is Cytoplasmic. Residues Ala-82–Leu-102 traverse the membrane as a helical segment. Residues Arg-103–Pro-113 lie on the Extracellular side of the membrane. A helical transmembrane segment spans residues Glu-114 to Phe-134. Over Gln-135–His-244 the chain is Cytoplasmic. Residues Phe-167 to Thr-196 form a disordered region. The helical transmembrane segment at Val-245–Leu-265 threads the bilayer. Residues Pro-266 to Tyr-278 are Extracellular-facing. The chain crosses the membrane as a helical span at residues Ile-279–Ile-299. Over Lys-300 to Phe-485 the chain is Cytoplasmic. Positions Gln-308 to Phe-485 are required for plasma membrane localization.

Belongs to the cation diffusion facilitator (CDF) transporter (TC 2.A.4) family. SLC30A subfamily. Forms homodimers. Forms heterodimers and high-molecular weight oligomers with SLC30A3, SLC30A2 and SLC30A4; heterodimerization is mediated by covalent-bound tyrosine residues, occurs probably in a tissue-specific manner and could mediate the intracellular zinc transport activity into early endosomes and recycling endosomes. In terms of tissue distribution, specifically expressed in fetal liver and fetal brain. Expressed in adult tissues with relative levels small intestine &gt; liver &gt; testes &gt; brain &gt; ovary &gt; colon &gt; cervix &gt; prostate &gt; placenta. Expressed in liver and neurons of the nervous system (at protein level).

The protein resides in the cell membrane. The protein localises to the golgi apparatus membrane. It is found in the recycling endosome membrane. Its subcellular location is the early endosome membrane. It catalyses the reaction Mn(2+)(out) + Ca(2+)(in) = Mn(2+)(in) + Ca(2+)(out). It carries out the reaction Zn(2+)(in) = Zn(2+)(out). Functionally, calcium:manganese antiporter of the plasma membrane mediating the efflux of intracellular manganese coupled to an active extracellular calcium exchange. Required for intracellular manganese homeostasis, an essential cation for the function of several enzymes, including some crucially important for the metabolism of neurotransmitters and other neuronal metabolic pathways. Manganese can also be cytotoxic and induce oxidative stress, mitochondrial dysfunction and apoptosis. Could also have an intracellular zinc ion transporter activity, directly regulating intracellular zinc ion homeostasis and more indirectly various signaling pathway and biological processes. This chain is Calcium/manganese antiporter SLC30A10, found in Homo sapiens (Human).